The sequence spans 172 residues: METQRASLCLGRWSLWLLLLGLVVPSASAQALSYREAVLRAVDRLNEQSSEANLYRLLELDQPPKADEDPGTPKPVSFTVKETVCPRPTRQPPELCDFKENGRVKQCVGTVTLNPSIHSLDISCNEIQSVRRRPRPPYLPRPRPPPFFPPRLPPRIPPGFPPRFPPRFPGKR.

Residues 1–29 (METQRASLCLGRWSLWLLLLGLVVPSASA) form the signal peptide. The residue at position 30 (glutamine 30) is a Pyrrolidone carboxylic acid. Positions 30-130 (QALSYREAVL…DISCNEIQSV (101 aa)) are excised as a propeptide. The tract at residues 61–80 (DQPPKADEDPGTPKPVSFTV) is disordered. 2 disulfide bridges follow: cysteine 85–cysteine 96 and cysteine 107–cysteine 124. Residues 130–172 (VRRRPRPPYLPRPRPPPFFPPRLPPRIPPGFPPRFPPRFPGKR) form a disordered region. Over residues 136-172 (PPYLPRPRPPPFFPPRLPPRIPPGFPPRFPPRFPGKR) the composition is skewed to pro residues. The residue at position 169 (proline 169) is a Proline amide.

The protein belongs to the cathelicidin family. As to expression, small intestine and bone marrow.

It is found in the secreted. Functionally, exerts a potent antimicrobial activity against both E.coli and B.megaterium. The polypeptide is Antibacterial protein PR-39 (PR39) (Sus scrofa (Pig)).